Reading from the N-terminus, the 123-residue chain is Thioredoxin H-type 1 (123 aa).

A2 carries the N-acetylalanine modification. The Thioredoxin domain maps to A2 to Q119. C45 and C48 are disulfide-bonded.

It belongs to the thioredoxin family. Plant H-type subfamily.

The protein resides in the cytoplasm. Participates in various redox reactions through the reversible oxidation of the active center dithiol to a disulfide. The H form is known to activate a number of cytosolic enzymes. The sequence is that of Thioredoxin H-type 1 (THL-1) from Brassica napus (Rape).